Consider the following 151-residue polypeptide: Large ribosomal subunit protein bL9 (151 aa).

This sequence belongs to the bacterial ribosomal protein bL9 family.

Its function is as follows. Binds to the 23S rRNA. The protein is Large ribosomal subunit protein bL9 of Lacticaseibacillus casei (strain BL23) (Lactobacillus casei).